A 371-amino-acid polypeptide reads, in one-letter code: Carbamoyl phosphate synthase small chain (371 aa).

A CPSase region spans residues 1-182 (MGVHKKGYLV…KNPIVHTPKN (182 aa)). Positions 49, 235, and 237 each coordinate L-glutamine. A Glutamine amidotransferase type-1 domain is found at 186–371 (RVVVLDLGVK…EFVKILEGRK (186 aa)). Catalysis depends on cysteine 263, which acts as the Nucleophile. L-glutamine-binding residues include leucine 264, glutamine 267, asparagine 305, glycine 307, and tyrosine 308. Catalysis depends on residues histidine 346 and glutamate 348.

It belongs to the CarA family. Composed of two chains; the small (or glutamine) chain promotes the hydrolysis of glutamine to ammonia, which is used by the large (or ammonia) chain to synthesize carbamoyl phosphate. Tetramer of heterodimers (alpha,beta)4.

It catalyses the reaction hydrogencarbonate + L-glutamine + 2 ATP + H2O = carbamoyl phosphate + L-glutamate + 2 ADP + phosphate + 2 H(+). The enzyme catalyses L-glutamine + H2O = L-glutamate + NH4(+). It participates in amino-acid biosynthesis; L-arginine biosynthesis; carbamoyl phosphate from bicarbonate: step 1/1. It functions in the pathway pyrimidine metabolism; UMP biosynthesis via de novo pathway; (S)-dihydroorotate from bicarbonate: step 1/3. Its function is as follows. Small subunit of the glutamine-dependent carbamoyl phosphate synthetase (CPSase). CPSase catalyzes the formation of carbamoyl phosphate from the ammonia moiety of glutamine, carbonate, and phosphate donated by ATP, constituting the first step of 2 biosynthetic pathways, one leading to arginine and/or urea and the other to pyrimidine nucleotides. The small subunit (glutamine amidotransferase) binds and cleaves glutamine to supply the large subunit with the substrate ammonia. This chain is Carbamoyl phosphate synthase small chain, found in Pyrococcus furiosus (strain ATCC 43587 / DSM 3638 / JCM 8422 / Vc1).